The primary structure comprises 354 residues: Cytoplasmic tRNA 2-thiolation protein 1 (354 aa).

This sequence belongs to the TtcA family. CTU1/NCS6/ATPBD3 subfamily.

It is found in the cytoplasm. The protein operates within tRNA modification; 5-methoxycarbonylmethyl-2-thiouridine-tRNA biosynthesis. Functionally, plays a central role in 2-thiolation of mcm(5)S(2)U at tRNA wobble positions of tRNA(Lys), tRNA(Glu) and tRNA(Gln). Directly binds tRNAs and probably acts by catalyzing adenylation of tRNAs, an intermediate required for 2-thiolation. It is unclear whether it acts as a sulfurtransferase that transfers sulfur from thiocarboxylated URM1 onto the uridine of tRNAs at wobble position. Prior mcm(5) tRNA modification by the elongator complex is required for 2-thiolation. May also be involved in protein urmylation. This is Cytoplasmic tRNA 2-thiolation protein 1 from Laccaria bicolor (strain S238N-H82 / ATCC MYA-4686) (Bicoloured deceiver).